A 684-amino-acid polypeptide reads, in one-letter code: Probable potassium transport system protein Kup (684 aa).

Transmembrane regions (helical) follow at residues 19–39 (ALLV…LYVM), 61–81 (VSLI…LIAL), 104–124 (WLVL…MLTP), 151–171 (QVIW…RFGT), 177–197 (AFGP…FIAL), 223–243 (MGLF…ALYS), 255–275 (LSWP…AVWL), 303–323 (LGAI…LISG), 352–372 (LYIP…IGYF), 381–401 (AYGL…YQYL), 407–427 (PAVI…VFFI), and 433–453 (FLHG…VMYV).

It belongs to the HAK/KUP transporter (TC 2.A.72) family.

It localises to the cell membrane. The enzyme catalyses K(+)(in) + H(+)(in) = K(+)(out) + H(+)(out). Its function is as follows. Transport of potassium into the cell. Likely operates as a K(+):H(+) symporter. The chain is Probable potassium transport system protein Kup from Lacticaseibacillus casei (strain BL23) (Lactobacillus casei).